Consider the following 950-residue polypeptide: Leucine--tRNA ligase (950 aa).

The short motif at 72-83 (PYPSGEGLHVGH) is the 'HIGH' region element. Positions 722-726 (KIGKS) match the 'KMSKS' region motif. Lysine 725 contacts ATP.

Belongs to the class-I aminoacyl-tRNA synthetase family.

It localises to the cytoplasm. The catalysed reaction is tRNA(Leu) + L-leucine + ATP = L-leucyl-tRNA(Leu) + AMP + diphosphate. This chain is Leucine--tRNA ligase, found in Mycobacterium sp. (strain KMS).